We begin with the raw amino-acid sequence, 1470 residues long: Membrane-associated guanylate kinase, WW and PDZ domain-containing protein 3 (1470 aa).

Positions 18–108 (CAVSWAGPPG…PIRLKTVKPG (91 aa)) constitute a PDZ 1 domain. The tract at residues 18 to 108 (CAVSWAGPPG…PIRLKTVKPG (91 aa)) is interaction with ADRB1 and TGFA. One can recognise a Guanylate kinase-like domain in the interval 116-290 (RHYLSLQFQK…RSMDFRNYMM (175 aa)). An ATP-binding site is contributed by 123–130 (FQKGSIDH). A disordered region spans residues 184–266 (TYDGNFYGTP…ETREMHSESS (83 aa)). The span at 193–204 (PKPPAEPSPFQP) shows a compositional bias: pro residues. Serine 236 is subject to Phosphoserine. Acidic residues predominate over residues 238-247 (LPEEEEDEDK). 2 consecutive WW domains span residues 296–329 (EPLP…DPRL) and 342–375 (GELP…NPVE). The PDZ 2 domain maps to 413–495 (RASLKKSTMG…NQYVNLTLCR (83 aa)). Residues 413–495 (RASLKKSTMG…NQYVNLTLCR (83 aa)) form an interaction with PTEN region. Residues 550–575 (LLSSDRLNGPSDSNEQRASLASSGSS) form a disordered region. Positions 559–575 (PSDSNEQRASLASSGSS) are enriched in polar residues. One can recognise a PDZ 3 domain in the interval 581-657 (TIPLVKGPKG…GADVPLLILR (77 aa)). Serine 598 bears the Phosphoserine mark. The interval 665 to 700 (KTAKMKTDTKETSGSLETINEPTPQPMPFPPSIIRS) is disordered. Polar residues predominate over residues 676–686 (TSGSLETINEP). Position 702 is a phosphoserine (serine 702). Residues 729 to 811 (DVFLRKQESG…NGHVLLTVRR (83 aa)) enclose the PDZ 4 domain. Residues 729 to 811 (DVFLRKQESG…NGHVLLTVRR (83 aa)) form an interaction with ADGRB1 region. Residues 818-847 (KQPEDESPQAFSQSGSPRLNRTELPTRSAP) form a disordered region. A compositionally biased stretch (polar residues) spans 826 to 847 (QAFSQSGSPRLNRTELPTRSAP). Phosphoserine is present on residues serine 833 and serine 916. One can recognise a PDZ 5 domain in the interval 852 to 939 (DVILQRKENE…TVTLTVVAEE (88 aa)). Residues 852–939 (DVILQRKENE…TVTLTVVAEE (88 aa)) are interaction with LPAR2 and GRIN2B. Positions 939 to 976 (EEHHGPPSGTNSARQSPALQHRPMGQAQATHIPGDRTA) are disordered. A compositionally biased stretch (polar residues) spans 946–956 (SGTNSARQSPA). The PDZ 6 domain occupies 1022–1104 (PVELERGPRG…KVLLLLRPGT (83 aa)). Disordered stretches follow at residues 1124 to 1146 (IYDE…ESHV) and 1167 to 1470 (DTVQ…DKQL). The segment covering 1175–1191 (TLNGSQPEMKYQSIQKN) has biased composition (polar residues). 2 stretches are compositionally biased toward basic and acidic residues: residues 1193-1209 (SKKD…KNLL) and 1230-1263 (RHSE…KGEN). Residues 1285–1304 (SSSPRKQQKIGGNSLSNTEG) are compositionally biased toward polar residues. Serine 1321 bears the Phosphoserine mark. Basic and acidic residues-rich tracts occupy residues 1326 to 1340 (PEGK…KDLK), 1350 to 1361 (RSPEKRSSKVDE), 1377 to 1397 (VSEK…DKTG), and 1422 to 1431 (EVTDRGKERA).

It belongs to the MAGUK family. In terms of assembly, interacts with ADRB1, ADGRB1, LPAR2/EDG4, FZD4, FZD7, GRIN2B, TGFA and VANGL2. Interacts with PTEN. Interacts with ADRB1, PTPRB and unidentified tyrosine phosphorylated proteins. Interacts with DLL1. Interacts with PRRG4 (via cytoplasmic domain).

It is found in the cell membrane. It localises to the cell junction. The protein localises to the tight junction. The protein resides in the nucleus. Its function is as follows. Acts as a scaffolding protein at cell-cell junctions, thereby regulating various cellular and signaling processes. Cooperates with PTEN to modulate the kinase activity of AKT1. Its interaction with PTPRB and tyrosine phosphorylated proteins suggests that it may link receptor tyrosine phosphatase with its substrates at the plasma membrane. In polarized epithelial cells, involved in efficient trafficking of TGFA to the cell surface. Regulates the ability of LPAR2 to activate ERK and RhoA pathways. Regulates the JNK signaling cascade via its interaction with FZD4 and VANGL2. The polypeptide is Membrane-associated guanylate kinase, WW and PDZ domain-containing protein 3 (Magi3) (Rattus norvegicus (Rat)).